The following is a 113-amino-acid chain: Protein AV2 (113 aa).

The segment at 94-113 is disordered; sequence SKTGLGEQAHVQKAHDVQDV.

This sequence belongs to the geminiviridae protein AV2/V2 family. As to quaternary structure, interacts with host SGS3.

The protein localises to the host cytoplasm. Its subcellular location is the host perinuclear region. Its function is as follows. Through its interaction with host SGS3, acts as a suppressor of RNA-mediated gene silencing, also known as post-transcriptional gene silencing (PTGS), a mechanism of plant viral defense that limits the accumulation of viral RNAs. The polypeptide is Protein AV2 (African cassava mosaic virus (isolate West Kenyan 844) (ACMV)).